The sequence spans 535 residues: Keratin, type II cytoskeletal 79 (535 aa).

Polar residues-rich tracts occupy residues 1 to 12 (MRSSVSRQTYST) and 28 to 38 (QARTSFSSVTV). Positions 1 to 53 (MRSSVSRQTYSTKGAFSSSSASGGGGSQARTSFSSVTVSRNSGRGGGPRCGPS) are disordered. A head region spans residues 1–141 (MRSSVSRQTY…DPEIQRVRTE (141 aa)). Positions 43 to 53 (GRGGGPRCGPS) are enriched in gly residues. Residues 142–177 (EREQIKTLNNKFASFIDKVRFLEQQNKVLETKWALL) form a coil 1A region. The IF rod domain maps to 142 to 457 (EREQIKTLNN…KLLESEESRM (316 aa)). A linker 1 region spans residues 178 to 198 (QEQGQKSGVTRNNLEPLFEHF). The segment at 199 to 290 (INNLRGKLDN…HLYEEELSQV (92 aa)) is coil 1B. Positions 291–314 (QTHVSDTSVILSMDNNRNLDLDSI) are linker 12. Residues 315–453 (IAEVKAQYEQ…ATYRKLLESE (139 aa)) are coil 2. A tail region spans residues 454-535 (ESRMSGECPS…TTVKTSSRRY (82 aa)).

Belongs to the intermediate filament family. As to quaternary structure, heterotetramer of two type I and two type II keratins.

The chain is Keratin, type II cytoskeletal 79 (KRT79) from Bos taurus (Bovine).